Reading from the N-terminus, the 426-residue chain is Serine--tRNA ligase (426 aa).

233–235 (TAE) serves as a coordination point for L-serine. 264–266 (RSE) is an ATP binding site. Position 287 (glutamate 287) interacts with L-serine. 351 to 354 (EISS) is a binding site for ATP. Serine 387 contacts L-serine.

This sequence belongs to the class-II aminoacyl-tRNA synthetase family. Type-1 seryl-tRNA synthetase subfamily. As to quaternary structure, homodimer. The tRNA molecule binds across the dimer.

It is found in the cytoplasm. It carries out the reaction tRNA(Ser) + L-serine + ATP = L-seryl-tRNA(Ser) + AMP + diphosphate + H(+). The catalysed reaction is tRNA(Sec) + L-serine + ATP = L-seryl-tRNA(Sec) + AMP + diphosphate + H(+). The protein operates within aminoacyl-tRNA biosynthesis; selenocysteinyl-tRNA(Sec) biosynthesis; L-seryl-tRNA(Sec) from L-serine and tRNA(Sec): step 1/1. Catalyzes the attachment of serine to tRNA(Ser). Is also able to aminoacylate tRNA(Sec) with serine, to form the misacylated tRNA L-seryl-tRNA(Sec), which will be further converted into selenocysteinyl-tRNA(Sec). The protein is Serine--tRNA ligase of Pseudomonas putida (strain ATCC 47054 / DSM 6125 / CFBP 8728 / NCIMB 11950 / KT2440).